We begin with the raw amino-acid sequence, 420 residues long: Serine hydroxymethyltransferase (420 aa).

Residues Leu121 and 125 to 127 (GHL) contribute to the (6S)-5,6,7,8-tetrahydrofolate site. Residue Lys230 is modified to N6-(pyridoxal phosphate)lysine. (6S)-5,6,7,8-tetrahydrofolate is bound by residues Glu246 and 354-356 (SPF).

It belongs to the SHMT family. Homodimer. Pyridoxal 5'-phosphate serves as cofactor.

The protein localises to the cytoplasm. It catalyses the reaction (6R)-5,10-methylene-5,6,7,8-tetrahydrofolate + glycine + H2O = (6S)-5,6,7,8-tetrahydrofolate + L-serine. Its pathway is one-carbon metabolism; tetrahydrofolate interconversion. It participates in amino-acid biosynthesis; glycine biosynthesis; glycine from L-serine: step 1/1. Catalyzes the reversible interconversion of serine and glycine with tetrahydrofolate (THF) serving as the one-carbon carrier. This reaction serves as the major source of one-carbon groups required for the biosynthesis of purines, thymidylate, methionine, and other important biomolecules. Also exhibits THF-independent aldolase activity toward beta-hydroxyamino acids, producing glycine and aldehydes, via a retro-aldol mechanism. The polypeptide is Serine hydroxymethyltransferase (Rickettsia akari (strain Hartford)).